A 405-amino-acid polypeptide reads, in one-letter code: Accessory Sec system protein translocase subunit SecY2 (405 aa).

Transmembrane regions (helical) follow at residues 14-34, 65-85, 104-124, 131-151, 156-176, 191-211, 247-267, 285-305, 343-363, and 368-388; these read LFTS…LPFV, IFSV…MFSF, MYLT…RLPV, ILVV…LVWL, ASMG…LNIP, GIIV…ALMY, MYVM…GFIF, PLWV…FAFV, FSVI…LFVL, and LLRL…IFTI.

It belongs to the SecY/SEC61-alpha family. SecY2 subfamily. As to quaternary structure, component of the accessory SecA2/SecY2 protein translocase complex required to export cell wall proteins. May form heterotrimers with SecE and SecG subunits.

The protein resides in the cell membrane. Its function is as follows. Part of the accessory SecA2/SecY2 system specifically required for export of possible cell wall proteins. The central subunit of a protein translocation channel. This chain is Accessory Sec system protein translocase subunit SecY2, found in Streptococcus pneumoniae serotype 4 (strain ATCC BAA-334 / TIGR4).